The following is a 274-amino-acid chain: Rhamnulose-1-phosphate aldolase (274 aa).

The active site involves Glu-117. Positions 141, 143, and 212 each coordinate Zn(2+).

This sequence belongs to the aldolase class II family. RhaD subfamily. Homotetramer. It depends on Zn(2+) as a cofactor.

It is found in the cytoplasm. It catalyses the reaction L-rhamnulose 1-phosphate = (S)-lactaldehyde + dihydroxyacetone phosphate. It participates in carbohydrate degradation; L-rhamnose degradation; glycerone phosphate from L-rhamnose: step 3/3. Catalyzes the reversible cleavage of L-rhamnulose-1-phosphate to dihydroxyacetone phosphate (DHAP) and L-lactaldehyde. In Escherichia coli O7:K1 (strain IAI39 / ExPEC), this protein is Rhamnulose-1-phosphate aldolase.